The sequence spans 299 residues: Mitochondrial 2-oxodicarboxylate carrier (299 aa).

Solcar repeat units lie at residues 11 to 100 (NEAS…YKKL), 107 to 196 (SPAL…VKNI), and 205 to 294 (LEFL…TYSW). 6 helical membrane passes run 17 to 37 (ILAG…LDVV), 62 to 82 (MIFR…PILA), 100 to 120 (LLGY…LGSG), 179 to 199 (HGVF…IIPV), 211 to 231 (FGIG…FDVA), and 274 to 290 (IMRL…VYEY).

It belongs to the mitochondrial carrier (TC 2.A.29) family.

It localises to the mitochondrion inner membrane. It carries out the reaction 2-oxoadipate(in) + 2-oxoglutarate(out) = 2-oxoadipate(out) + 2-oxoglutarate(in). It catalyses the reaction hexanedioate(in) + 2-oxoglutarate(out) = hexanedioate(out) + 2-oxoglutarate(in). The enzyme catalyses L-2-aminoadipate(in) + 2-oxoglutarate(out) = L-2-aminoadipate(out) + 2-oxoglutarate(in). The catalysed reaction is glutarate(in) + 2-oxoglutarate(out) = glutarate(out) + 2-oxoglutarate(in). It carries out the reaction 2-oxoheptanedioate(in) + 2-oxoglutarate(out) = 2-oxoheptanedioate(out) + 2-oxoglutarate(in). It catalyses the reaction heptanedioate(in) + 2-oxoglutarate(out) = heptanedioate(out) + 2-oxoglutarate(in). The enzyme catalyses citrate(in) + 2-oxoglutarate(out) = citrate(out) + 2-oxoglutarate(in). In terms of biological role, transports dicarboxylates across the inner membranes of mitochondria by a counter-exchange mechanism. Can transport 2-oxoadipate (2-oxohexanedioate), 2-oxoglutarate, adipate (hexanedioate), glutarate, and to a lesser extent, pimelate (heptanedioate), 2-oxopimelate (2-oxoheptanedioate), 2-aminoadipate (2-aminohexanedioate), oxaloacetate, and citrate. Plays a central role in catabolism of lysine, hydroxylysine, and tryptophan, by transporting common metabolite intermediates (such as 2-oxoadipate) into the mitochondria, where it is converted into acetyl-CoA and can enter the citric acid (TCA) cycle. The chain is Mitochondrial 2-oxodicarboxylate carrier (SLC25A21) from Bos taurus (Bovine).